A 278-amino-acid polypeptide reads, in one-letter code: Digeranylgeranylglyceryl phosphate synthase (278 aa).

The next 7 helical transmembrane spans lie at 12 to 32 (LKNC…ASYF), 34 to 54 (ISMI…CGFG), 91 to 111 (LLVV…LMAV), 142 to 162 (VFIF…LFLC), 204 to 224 (FLLV…FFGI), 226 to 246 (YLIS…NLVM), and 257 to 277 (SRNI…GSLF).

It belongs to the UbiA prenyltransferase family. DGGGP synthase subfamily. Requires Mg(2+) as cofactor.

It localises to the cell membrane. The catalysed reaction is sn-3-O-(geranylgeranyl)glycerol 1-phosphate + (2E,6E,10E)-geranylgeranyl diphosphate = 2,3-bis-O-(geranylgeranyl)-sn-glycerol 1-phosphate + diphosphate. It functions in the pathway membrane lipid metabolism; glycerophospholipid metabolism. In terms of biological role, prenyltransferase that catalyzes the transfer of the geranylgeranyl moiety of geranylgeranyl diphosphate (GGPP) to the C2 hydroxyl of (S)-3-O-geranylgeranylglyceryl phosphate (GGGP). This reaction is the second ether-bond-formation step in the biosynthesis of archaeal membrane lipids. This chain is Digeranylgeranylglyceryl phosphate synthase, found in Methanococcus maripaludis (strain C6 / ATCC BAA-1332).